The following is a 549-amino-acid chain: Undecaprenyl phosphate-alpha-4-amino-4-deoxy-L-arabinose arabinosyl transferase 2 (549 aa).

12 consecutive transmembrane segments (helical) span residues 9 to 29, 80 to 102, 112 to 132, 133 to 153, 176 to 196, 204 to 224, 259 to 279, 290 to 310, 312 to 332, 342 to 362, 377 to 397, and 402 to 422; these read LLLG…GLWI, LFGV…FLIA, SFVC…AGYA, NLDP…WFAL, FMTK…PWML, LLLY…PWAL, FYLP…PVAF, GIAF…LSNG, LPTY…HALA, ALGL…IGLV, SLVL…LQAF, and CWAA…AALP.

The protein belongs to the glycosyltransferase 83 family.

The protein resides in the cell inner membrane. It catalyses the reaction 4-amino-4-deoxy-alpha-L-arabinopyranosyl di-trans,octa-cis-undecaprenyl phosphate + lipid IVA = lipid IIA + di-trans,octa-cis-undecaprenyl phosphate.. It functions in the pathway lipopolysaccharide metabolism; 4-amino-4-deoxy-beta-L-arabinose-lipid A biosynthesis. Functionally, catalyzes the transfer of the L-Ara4N moiety of the glycolipid undecaprenyl phosphate-alpha-L-Ara4N to lipid A. The modified arabinose is attached to lipid A and is required for resistance to polymyxin and cationic antimicrobial peptides. This is Undecaprenyl phosphate-alpha-4-amino-4-deoxy-L-arabinose arabinosyl transferase 2 from Pseudomonas fluorescens (strain Pf0-1).